The sequence spans 436 residues: Protein translocase subunit SecY (436 aa).

The next 10 helical transmembrane spans lie at 19 to 39, 68 to 88, 116 to 136, 151 to 171, 179 to 199, 216 to 236, 269 to 289, 313 to 333, 372 to 392, and 395 to 415; these read ILFT…TVPG, FSVF…VQLL, YISL…FNAL, LFIG…GEQI, GVSM…VKGI, IIFV…TTYV, VIPV…LQFL, GIAM…FVQI, VGSL…DLFG, and DTVA…IEGM.

It belongs to the SecY/SEC61-alpha family. In terms of assembly, component of the Sec protein translocase complex. Heterotrimer consisting of SecY, SecE and SecG subunits. The heterotrimers can form oligomers, although 1 heterotrimer is thought to be able to translocate proteins. Interacts with the ribosome. Interacts with SecDF, and other proteins may be involved. Interacts with SecA.

Its subcellular location is the cell membrane. Functionally, the central subunit of the protein translocation channel SecYEG. Consists of two halves formed by TMs 1-5 and 6-10. These two domains form a lateral gate at the front which open onto the bilayer between TMs 2 and 7, and are clamped together by SecE at the back. The channel is closed by both a pore ring composed of hydrophobic SecY resides and a short helix (helix 2A) on the extracellular side of the membrane which forms a plug. The plug probably moves laterally to allow the channel to open. The ring and the pore may move independently. The protein is Protein translocase subunit SecY of Streptococcus gordonii (strain Challis / ATCC 35105 / BCRC 15272 / CH1 / DL1 / V288).